Reading from the N-terminus, the 652-residue chain is ATP-binding cassette sub-family G member 5 (652 aa).

Positions 1-30 (MSELPFLSPEGARGPHNNRGSQSSLEEGSV) are disordered. Topologically, residues 1–384 (MSELPFLSPE…RVTRNLMRNK (384 aa)) are cytoplasmic. The segment covering 18 to 30 (NRGSQSSLEEGSV) has biased composition (polar residues). The region spanning 39–294 (LGVLNVSFSV…FNNCGYPCPE (256 aa)) is the ABC transporter domain. Residue 87–94 (GSSGSGKT) participates in ATP binding. A helical transmembrane segment spans residues 385 to 405 (QVVIMRLVQNLIMGLFLIFYL). Residues 389-646 (MRLVQNLIMG…ILGMVVFKVR (258 aa)) enclose the ABC transmembrane type-2 domain. Residues 406-422 (LRVQNNMLKGAVQDRVG) are Extracellular-facing. A helical membrane pass occupies residues 423–443 (LLYQLVGATPYTGMLNAVNLF). At 444 to 468 (PMLRAVSDQESQDGLYQKWQMLLAY) the chain is on the cytoplasmic side. A helical membrane pass occupies residues 469–490 (VLHALPFSIVATVIFSSVCYWT). The Extracellular portion of the chain corresponds to 491–501 (LGLYPEVARFG). A helical membrane pass occupies residues 502 to 522 (YFSAALLAPHLIGEFLTLVLL). The Cytoplasmic segment spans residues 523–529 (GMVQNPN). A helical membrane pass occupies residues 530 to 550 (IVNSIVALLSISGLLIGSGFI). Residues 551 to 624 (RNIEEMPIPL…PGATSRFTTN (74 aa)) lie on the Extracellular side of the membrane. Residues Asn585 and Asn592 are each glycosylated (N-linked (GlcNAc...) asparagine). The chain crosses the membrane as a helical span at residues 625–645 (FLILYSFIPTLVILGMVVFKV). Residues 646-652 (RDYLISR) are Cytoplasmic-facing.

It belongs to the ABC transporter superfamily. ABCG family. Eye pigment precursor importer (TC 3.A.1.204) subfamily. Heterodimer with ABCG8. It depends on Mg(2+) as a cofactor. Post-translationally, N-glycosylated. N-glycosylation is important for efficient export out of the endoplasmic reticulum. Detected in liver (at protein level). Expressed only in liver and intestine.

It is found in the cell membrane. It localises to the apical cell membrane. The catalysed reaction is cholesterol(in) + ATP + H2O = cholesterol(out) + ADP + phosphate + H(+). The enzyme catalyses sitosterol(in) + ATP + H2O = sitosterol(out) + ADP + phosphate + H(+). Functionally, ABCG5 and ABCG8 form an obligate heterodimer that mediates Mg(2+)- and ATP-dependent sterol transport across the cell membrane. Plays an essential role in the selective transport of dietary plant sterols and cholesterol in and out of the enterocytes and in the selective sterol excretion by the liver into bile. Required for normal sterol homeostasis. The heterodimer with ABCG8 has ATPase activity. The chain is ATP-binding cassette sub-family G member 5 from Rattus norvegicus (Rat).